The chain runs to 161 residues: uncharacterized protein (161 aa).

2 helical membrane passes run 13 to 35 and 40 to 62; these read VAAV…PHAN and VFSA…PFIS.

Its subcellular location is the cell membrane. This is an uncharacterized protein from Archaeoglobus fulgidus (strain ATCC 49558 / DSM 4304 / JCM 9628 / NBRC 100126 / VC-16).